Consider the following 271-residue polypeptide: MSEMRLIVAGAGGRMGRALTRAISETEGVVLTGALESPNSELLGKDAGTLAGLPANGVLLSADLWSLSANADGIVDFTVPQATIANVAIAAQRGIAHIIGTTGLSTSDNAVIQSVTDRAVVVKSGNMSLGVNLLAAIAKRVAQSLDDSFDIEIVEMHHRAKVDAPSGTALLLGEAVAAGRKIDLATHSARGRDGFTGARKPGDIGFASLRGGTVTGDHTVIFAGASERIELTHKAEDRMIFAHGALTAARWAKGKKPGLYSMADVLGLGDI.

Residues 10–15 (GAGGRM), E36, 100–102 (GTT), and 124–127 (SGNM) contribute to the NAD(+) site. Residue H157 is the Proton donor/acceptor of the active site. H158 serves as a coordination point for (S)-2,3,4,5-tetrahydrodipicolinate. The active-site Proton donor is the K161. 167-168 (GT) contributes to the (S)-2,3,4,5-tetrahydrodipicolinate binding site.

It belongs to the DapB family.

It localises to the cytoplasm. The enzyme catalyses (S)-2,3,4,5-tetrahydrodipicolinate + NAD(+) + H2O = (2S,4S)-4-hydroxy-2,3,4,5-tetrahydrodipicolinate + NADH + H(+). It carries out the reaction (S)-2,3,4,5-tetrahydrodipicolinate + NADP(+) + H2O = (2S,4S)-4-hydroxy-2,3,4,5-tetrahydrodipicolinate + NADPH + H(+). It functions in the pathway amino-acid biosynthesis; L-lysine biosynthesis via DAP pathway; (S)-tetrahydrodipicolinate from L-aspartate: step 4/4. Catalyzes the conversion of 4-hydroxy-tetrahydrodipicolinate (HTPA) to tetrahydrodipicolinate. The chain is 4-hydroxy-tetrahydrodipicolinate reductase from Rhodopseudomonas palustris (strain ATCC BAA-98 / CGA009).